The chain runs to 214 residues: UPF0301 protein blr1492 (214 aa).

Residues 1-22 (MAPTGKRTGESTRSTGPAPPSS) are disordered.

It belongs to the UPF0301 (AlgH) family.

The polypeptide is UPF0301 protein blr1492 (Bradyrhizobium diazoefficiens (strain JCM 10833 / BCRC 13528 / IAM 13628 / NBRC 14792 / USDA 110)).